The chain runs to 571 residues: Isocitrate dehydrogenase kinase/phosphatase (571 aa).

ATP contacts are provided by residues alanine 318–methionine 324 and lysine 339. Aspartate 374 is a catalytic residue.

This sequence belongs to the AceK family.

Its subcellular location is the cytoplasm. The catalysed reaction is L-seryl-[isocitrate dehydrogenase] + ATP = O-phospho-L-seryl-[isocitrate dehydrogenase] + ADP + H(+). Its function is as follows. Bifunctional enzyme which can phosphorylate or dephosphorylate isocitrate dehydrogenase (IDH) on a specific serine residue. This is a regulatory mechanism which enables bacteria to bypass the Krebs cycle via the glyoxylate shunt in response to the source of carbon. When bacteria are grown on glucose, IDH is fully active and unphosphorylated, but when grown on acetate or ethanol, the activity of IDH declines drastically concomitant with its phosphorylation. The sequence is that of Isocitrate dehydrogenase kinase/phosphatase from Pseudomonas entomophila (strain L48).